The sequence spans 204 residues: Recombination protein RecR (204 aa).

The C4-type zinc finger occupies 57–72 (CPTCFNYTDTDICRYC). A Toprim domain is found at 80 to 181 (ESICVVEEPS…KLSRIAHGVP (102 aa)).

The protein belongs to the RecR family.

Functionally, may play a role in DNA repair. It seems to be involved in an RecBC-independent recombinational process of DNA repair. It may act with RecF and RecO. In Bdellovibrio bacteriovorus (strain ATCC 15356 / DSM 50701 / NCIMB 9529 / HD100), this protein is Recombination protein RecR.